The following is a 644-amino-acid chain: Exoribonuclease 2 (644 aa).

The region spanning 189 to 516 (REDLTALNFV…NHRLLKAIIA (328 aa)) is the RNB domain. Residues 561–643 (DERFNAEIID…ETRSVIARPA (83 aa)) enclose the S1 motif domain.

It belongs to the RNR ribonuclease family. RNase II subfamily.

The protein localises to the cytoplasm. It catalyses the reaction Exonucleolytic cleavage in the 3'- to 5'-direction to yield nucleoside 5'-phosphates.. Its function is as follows. Involved in mRNA degradation. Hydrolyzes single-stranded polyribonucleotides processively in the 3' to 5' direction. The protein is Exoribonuclease 2 of Serratia proteamaculans (strain 568).